The chain runs to 126 residues: C-type natriuretic peptide (126 aa).

Residues 1–23 (MHLSQLLACALLLALLSLRPSEA) form the signal peptide. A disordered region spans residues 20–71 (PSEAKPGAPPKVPRTPSGEEVAEPQAAGGGQKKGDKTPGGGGANLKDDRSRL). A propeptide spanning residues 24 to 73 (KPGAPPKVPRTPSGEEVAEPQAAGGGQKKGDKTPGGGGANLKDDRSRLLR) is cleaved from the precursor. The segment covering 46–62 (AGGGQKKGDKTPGGGGA) has biased composition (gly residues). A disulfide bridge connects residues Cys110 and Cys126.

It belongs to the natriuretic peptide family. Degraded by IDE (in vitro).

Its subcellular location is the secreted. Functionally, hormone which plays a role in endochondral ossification through regulation of cartilaginous growth plate chondrocytes proliferation and differentiation. May also be vasoactive and natriuretic. Acts by specifically binding and stimulating NPR2 to produce cGMP. Binds the clearance receptor NPR3. This Bos taurus (Bovine) protein is C-type natriuretic peptide (NPPC).